The primary structure comprises 646 residues: Lipoteichoic acid synthase (646 aa).

Residues 1-7 (MKLHKKK) are Cytoplasmic-facing. The chain crosses the membrane as a helical span at residues 8–28 (LTLFAFFILTVLTVTLKTYFS). At 29-43 (YYVDFSLGVKGLVQN) the chain is on the extracellular side. The helical transmembrane segment at 44–64 (LILLMNPYSLIALVLSIFLFF) threads the bilayer. The Cytoplasmic portion of the chain corresponds to 65-68 (KGKK). A helical membrane pass occupies residues 69-89 (AFWFIFIGGFILTFLLYANVV). At 90-119 (YFRFFSDFLTFSTLNQAGNVESMGGAVTAS) the chain is on the extracellular side. The helical transmembrane segment at 120-140 (FKWYDFVYFIDTIIYLFVLIF) threads the bilayer. The Cytoplasmic segment spans residues 141-153 (KQKWLDKRVFSKK). Residues 154–174 (FVPVVMAASIALFFLNLAFAE) traverse the membrane as a helical segment. Topologically, residues 175–646 (SDRPELLTRT…KTGPKGQERK (472 aa)) are extracellular. Mn(2+) is bound by residues E255 and T300. T300 is a catalytic residue. Residue H416 coordinates substrate. The Mn(2+) site is built by D475 and H476. The segment at 579–646 (IYDNKNNEPM…KTGPKGQERK (68 aa)) is disordered. Composition is skewed to basic and acidic residues over residues 580–607 (YDNKNNEPMTEKPKDFEKRKQQSEKDLQ) and 625–646 (DFDKIKPSEYEYKTGPKGQERK).

This sequence belongs to the LTA synthase family. Post-translationally, proteolytically cleaved.

The protein resides in the cell membrane. Its subcellular location is the secreted. The protein operates within cell wall biogenesis; lipoteichoic acid biosynthesis. In terms of biological role, catalyzes the polymerization of lipoteichoic acid (LTA) polyglycerol phosphate, a reaction that presumably uses phosphatidylglycerol (PG) as substrate. Is required for staphylococcal growth and cell division process. This Staphylococcus saprophyticus subsp. saprophyticus (strain ATCC 15305 / DSM 20229 / NCIMB 8711 / NCTC 7292 / S-41) protein is Lipoteichoic acid synthase (ltaS).